Consider the following 361-residue polypeptide: RuBisCO accumulation factor 1 (361 aa).

Residues 16–197 (NELAQELLRK…RKQIEQLLVD (182 aa)) form an N-terminal alpha-helix region. The segment at 221 to 347 (PRIVPVVGQL…VIILVRPRRI (127 aa)) is C-terminal beta-sheet.

Belongs to the RAF family. Homodimer. Forms an RbcL(8)-Raf1(8) complex. Each Raf1 dimer clamps the exterior of an RbcL dimer, protecting it. The extreme C-terminus (residues 354-361) inserts into the catalytic pocket of RbcL where the Glu-361 forms a salt bridge with 'Lys-202'. This insertion probably contributes to the assembly of RbcL(8). Forms complexes of many stoichiometries with RbcL with and without RbcS. RbcX and Raf1 can bind simultaneously to RbcL.

The protein localises to the cytoplasm. A major RuBisCO chaperone. Acts after GroEL-GroES chaperonin to fold and/or assemble the large subunit of RuBisCO (ccbL, rbcL). Cooperates with RbcX in RbcL folding, plays the major role in assembly of dimers into RbcL(8)-Raf1(8) intermediate complexes. RbcS replaces Raf1, leading to holoenzyme formation. In terms of biological role, in vitro acts as an antagonist to CcmM35, suggesting it might regulate RuBisCO condensation and decondensation. In Nostoc sp. (strain PCC 7120 / SAG 25.82 / UTEX 2576), this protein is RuBisCO accumulation factor 1.